Here is a 478-residue protein sequence, read N- to C-terminus: Ninja-family protein 7 (478 aa).

Disordered regions lie at residues 1 to 247 (MDDD…LTPG), 336 to 374 (SFTAKDKADQTGTKQVDDGKKPREAGASSSAHAEDEKKA), and 454 to 478 (DAPAQDNSATLPAFPAGNQATSAEN). The span at 23-35 (KARDAPLEPKAEP) shows a compositional bias: basic and acidic residues. Positions 169 to 179 (ISISTDDGSTG) are enriched in polar residues. Positions 180–189 (ENEDVAESEA) are enriched in acidic residues. Residues 233–242 (SFSGSESSSG) are compositionally biased toward low complexity. The segment covering 339–359 (AKDKADQTGTKQVDDGKKPRE) has biased composition (basic and acidic residues).

The protein belongs to the Ninja family.

It is found in the nucleus. This is Ninja-family protein 7 from Zea mays (Maize).